The chain runs to 1026 residues: Tyrosine-protein phosphatase 1 (1026 aa).

The region spanning 29 to 315 is the FERM domain; that stretch reads IRCTVTFLDS…EQHTFFRLKT (287 aa). 4 disordered regions span residues 376 to 396, 430 to 456, 489 to 515, and 584 to 616; these read SIDS…LPSS, PLTT…SLRQ, GIHA…KSAN, and SFAS…DQVV. Over residues 446 to 456 the composition is skewed to polar residues; that stretch reads DSESSAPSLRQ. The segment covering 600–609 has biased composition (low complexity); sequence SPQSNKSSSP. In terms of domain architecture, PDZ spans 617–689; it reads TIKMRPDRHG…DHVVQFIRSA (73 aa). The Tyrosine-protein phosphatase domain maps to 753-1011; that stretch reads VVDHFEMLYR…TFVCESILRA (259 aa). Substrate contacts are provided by residues Asp920, 952-958, and Gln996; that span reads CSAGIGR. The active-site Phosphocysteine intermediate is Cys952.

It belongs to the protein-tyrosine phosphatase family. Non-receptor class subfamily.

It is found in the cytoplasm. The protein localises to the cytoskeleton. The catalysed reaction is O-phospho-L-tyrosyl-[protein] + H2O = L-tyrosyl-[protein] + phosphate. In Caenorhabditis elegans, this protein is Tyrosine-protein phosphatase 1 (ptp-1).